The chain runs to 276 residues: NH(3)-dependent NAD(+) synthetase (276 aa).

43-50 (GISGGVDS) lines the ATP pocket. D49 contacts Mg(2+). Residue R146 coordinates deamido-NAD(+). Residue T166 participates in ATP binding. Position 171 (E171) interacts with Mg(2+). Positions 179 and 186 each coordinate deamido-NAD(+). Residues K195 and T217 each contribute to the ATP site. Residue 266–267 (HK) coordinates deamido-NAD(+).

The protein belongs to the NAD synthetase family. Homodimer.

The catalysed reaction is deamido-NAD(+) + NH4(+) + ATP = AMP + diphosphate + NAD(+) + H(+). Its pathway is cofactor biosynthesis; NAD(+) biosynthesis; NAD(+) from deamido-NAD(+) (ammonia route): step 1/1. Functionally, catalyzes the ATP-dependent amidation of deamido-NAD to form NAD. Uses ammonia as a nitrogen source. The sequence is that of NH(3)-dependent NAD(+) synthetase from Shewanella piezotolerans (strain WP3 / JCM 13877).